Here is a 146-residue protein sequence, read N- to C-terminus: Large ribosomal subunit protein uL13 (146 aa).

It belongs to the universal ribosomal protein uL13 family. Part of the 50S ribosomal subunit.

Functionally, this protein is one of the early assembly proteins of the 50S ribosomal subunit, although it is not seen to bind rRNA by itself. It is important during the early stages of 50S assembly. This chain is Large ribosomal subunit protein uL13, found in Spiroplasma citri.